The following is a 149-amino-acid chain: 3-dehydroquinate dehydratase (149 aa).

The active-site Proton acceptor is the Y26. Residues N78, H84, and D91 each coordinate substrate. H104 functions as the Proton donor in the catalytic mechanism. Substrate is bound by residues 105-106 (LS) and R115.

This sequence belongs to the type-II 3-dehydroquinase family. As to quaternary structure, homododecamer.

It carries out the reaction 3-dehydroquinate = 3-dehydroshikimate + H2O. Its pathway is metabolic intermediate biosynthesis; chorismate biosynthesis; chorismate from D-erythrose 4-phosphate and phosphoenolpyruvate: step 3/7. Functionally, catalyzes a trans-dehydration via an enolate intermediate. The polypeptide is 3-dehydroquinate dehydratase (Polynucleobacter necessarius subsp. necessarius (strain STIR1)).